Here is a 180-residue protein sequence, read N- to C-terminus: MKYNREKLKNKVCLAIIGMPHGIKGDVLLKILSSEPQRLKTYGTLYDDRGHSYEIVMLRMQKKNAIVHFKGVEDRSAAEALRGIHLYVARDQLVDDLTEDEFYQVDLIGLRVQDCTGRILGEVSGLFNFGAGDLLEMRLNTGKTVLIPFSKAAVLEVCIASGFLVVDPVAAGLSDGGENT.

The PRC barrel domain maps to 99 to 172 (EDEFYQVDLI…FLVVDPVAAG (74 aa)).

Belongs to the RimM family. Binds ribosomal protein uS19.

Its subcellular location is the cytoplasm. An accessory protein needed during the final step in the assembly of 30S ribosomal subunit, possibly for assembly of the head region. Essential for efficient processing of 16S rRNA. May be needed both before and after RbfA during the maturation of 16S rRNA. It has affinity for free ribosomal 30S subunits but not for 70S ribosomes. The chain is Ribosome maturation factor RimM from Bartonella henselae (strain ATCC 49882 / DSM 28221 / CCUG 30454 / Houston 1) (Rochalimaea henselae).